Here is a 1093-residue protein sequence, read N- to C-terminus: Mediator of RNA polymerase II transcription subunit 14 (1093 aa).

2 disordered regions span residues 1–61 (MPGV…KIDG) and 1035–1060 (TKSD…SQAA). The segment covering 19–31 (DTQTPSNGDNLRN) has biased composition (polar residues). The span at 41–61 (KGDKDHDPDKESYTGKPKIDG) shows a compositional bias: basic and acidic residues. The span at 1040 to 1056 (DYSTQPVPEKQSQTGAP) shows a compositional bias: polar residues.

The protein belongs to the Mediator complex subunit 14 family. As to quaternary structure, component of the Mediator complex.

It is found in the nucleus. In terms of biological role, component of the Mediator complex, a coactivator involved in the regulated transcription of nearly all RNA polymerase II-dependent genes. Mediator functions as a bridge to convey information from gene-specific regulatory proteins to the basal RNA polymerase II transcription machinery. Mediator is recruited to promoters by direct interactions with regulatory proteins and serves as a scaffold for the assembly of a functional preinitiation complex with RNA polymerase II and the general transcription factors. The polypeptide is Mediator of RNA polymerase II transcription subunit 14 (rgr1) (Neosartorya fischeri (strain ATCC 1020 / DSM 3700 / CBS 544.65 / FGSC A1164 / JCM 1740 / NRRL 181 / WB 181) (Aspergillus fischerianus)).